The sequence spans 303 residues: Glucose-1-phosphate thymidylyltransferase (303 aa).

2 residues coordinate Mg(2+): Asp-108 and Asp-222.

It belongs to the glucose-1-phosphate thymidylyltransferase family. Requires Mg(2+) as cofactor.

It carries out the reaction dTTP + alpha-D-glucose 1-phosphate + H(+) = dTDP-alpha-D-glucose + diphosphate. Its function is as follows. Catalyzes the formation of dTDP-glucose, from dTTP and glucose 1-phosphate, as well as its pyrophosphorolysis. Functionally, probably involved in the biosynthesis of the acarviose moiety of the alpha-glucosidase inhibitor acarbose. The protein is Glucose-1-phosphate thymidylyltransferase (acbA) of Actinoplanes sp. (strain ATCC 31044 / CBS 674.73 / SE50/110).